Here is a 1053-residue protein sequence, read N- to C-terminus: Protein CLEC16A (1053 aa).

The 148-residue stretch at 51–198 (IRSITEILIW…AVRTITLNVY (148 aa)) folds into the FPL domain. Disordered regions lie at residues 375-434 (SLEM…GESE), 452-471 (STSV…AATC), and 892-983 (SSPS…SPSL). Residues 381–392 (HKGKRRVQKRPN) are compositionally biased toward basic residues. Residues 892-938 (SSPSLSSQSPPSASGSPSGSGSTSHCDSGGTSSSSTPSTAQSPADAP) show a composition bias toward low complexity.

The protein belongs to the CLEC16A/gop-1 family. As to quaternary structure, interacts with RNF41/NRDP1. In terms of tissue distribution, almost exclusively expressed in immune cells, including dendritic cells, B-lymphocytes and natural killer cells.

It is found in the endosome membrane. The protein localises to the lysosome membrane. Functionally, regulator of mitophagy through the upstream regulation of the RNF41/NRDP1-PRKN pathway. Mitophagy is a selective form of autophagy necessary for mitochondrial quality control. The RNF41/NRDP1-PRKN pathway regulates autophagosome-lysosome fusion during late mitophagy. May protect RNF41/NRDP1 from proteasomal degradation, RNF41/NRDP1 which regulates proteasomal degradation of PRKN. Plays a key role in beta cells functions by regulating mitophagy/autophagy and mitochondrial health. The sequence is that of Protein CLEC16A from Homo sapiens (Human).